The sequence spans 225 residues: UPF0758 protein Shal_0429 (225 aa).

One can recognise an MPN domain in the interval 102-224 (ILSDPDLTRD…IVSFAERGWI (123 aa)). 3 residues coordinate Zn(2+): histidine 173, histidine 175, and aspartate 186. A JAMM motif motif is present at residues 173-186 (HNHPSGIAEPSTAD).

Belongs to the UPF0758 family.

The protein is UPF0758 protein Shal_0429 of Shewanella halifaxensis (strain HAW-EB4).